A 323-amino-acid chain; its full sequence is Malate dehydrogenase (323 aa).

Residue 11 to 17 (GAAGQIA) coordinates NAD(+). Positions 92 and 98 each coordinate substrate. NAD(+) is bound by residues Asn-105, Gln-112, and 129–131 (VGN). Residues Asn-131 and Arg-162 each contribute to the substrate site. The active-site Proton acceptor is the His-187.

Belongs to the LDH/MDH superfamily. MDH type 2 family.

The enzyme catalyses (S)-malate + NAD(+) = oxaloacetate + NADH + H(+). Catalyzes the reversible oxidation of malate to oxaloacetate. The sequence is that of Malate dehydrogenase from Corynebacterium efficiens (strain DSM 44549 / YS-314 / AJ 12310 / JCM 11189 / NBRC 100395).